A 24-amino-acid polypeptide reads, in one-letter code: Metallothionein (24 aa).

Residues Cys-3, Cys-5, Cys-8, Cys-10, Cys-17, Cys-19, and Cys-22 each coordinate Cd(2+).

This sequence belongs to the metallothionein superfamily. Type 8 family. Post-translationally, contains 4 disulfide bonds.

In terms of biological role, metallothioneins have a high content of cysteine residues that bind various heavy metals. The polypeptide is Metallothionein (Neonectria lugdunensis (Aquatic fungus)).